The following is a 107-amino-acid chain: L-rhamnose mutarotase (107 aa).

Tyr-21 is a substrate binding site. The active-site Proton donor is His-25. Substrate contacts are provided by residues Tyr-44 and 79–80 (WW). The disordered stretch occupies residues 88–107 (ETNPDNSPKTNSLKEVFHLD). Residues 90–100 (NPDNSPKTNSL) are compositionally biased toward polar residues.

Belongs to the rhamnose mutarotase family. As to quaternary structure, homodimer.

The protein localises to the cytoplasm. The enzyme catalyses alpha-L-rhamnose = beta-L-rhamnose. It participates in carbohydrate metabolism; L-rhamnose metabolism. Its function is as follows. Involved in the anomeric conversion of L-rhamnose. In Flavobacterium johnsoniae (strain ATCC 17061 / DSM 2064 / JCM 8514 / BCRC 14874 / CCUG 350202 / NBRC 14942 / NCIMB 11054 / UW101) (Cytophaga johnsonae), this protein is L-rhamnose mutarotase.